The primary structure comprises 138 residues: Large ribosomal subunit protein bL19 (138 aa).

The protein belongs to the bacterial ribosomal protein bL19 family.

Functionally, this protein is located at the 30S-50S ribosomal subunit interface and may play a role in the structure and function of the aminoacyl-tRNA binding site. The sequence is that of Large ribosomal subunit protein bL19 from Leptospira interrogans serogroup Icterohaemorrhagiae serovar Lai (strain 56601).